Reading from the N-terminus, the 458-residue chain is Cytoplasmic tRNA 2-thiolation protein 2 (458 aa).

The protein belongs to the CTU2/NCS2 family.

Its subcellular location is the cytoplasm. It functions in the pathway tRNA modification; 5-methoxycarbonylmethyl-2-thiouridine-tRNA biosynthesis. Plays a central role in 2-thiolation of mcm(5)S(2)U at tRNA wobble positions of tRNA(Lys), tRNA(Glu) and tRNA(Gln). May act by forming a heterodimer with NCS6/CTU1 that ligates sulfur from thiocarboxylated URM1 onto the uridine of tRNAs at wobble position. The sequence is that of Cytoplasmic tRNA 2-thiolation protein 2 from Arabidopsis thaliana (Mouse-ear cress).